Here is a 381-residue protein sequence, read N- to C-terminus: Succinyl-diaminopimelate desuccinylase (381 aa).

Position 69 (His-69) interacts with Zn(2+). Asp-71 is a catalytic residue. Asp-103 lines the Zn(2+) pocket. The active-site Proton acceptor is Glu-137. Zn(2+)-binding residues include Glu-138, Glu-166, and His-355.

The protein belongs to the peptidase M20A family. DapE subfamily. As to quaternary structure, homodimer. Zn(2+) serves as cofactor. Requires Co(2+) as cofactor.

It carries out the reaction N-succinyl-(2S,6S)-2,6-diaminopimelate + H2O = (2S,6S)-2,6-diaminopimelate + succinate. It participates in amino-acid biosynthesis; L-lysine biosynthesis via DAP pathway; LL-2,6-diaminopimelate from (S)-tetrahydrodipicolinate (succinylase route): step 3/3. In terms of biological role, catalyzes the hydrolysis of N-succinyl-L,L-diaminopimelic acid (SDAP), forming succinate and LL-2,6-diaminopimelate (DAP), an intermediate involved in the bacterial biosynthesis of lysine and meso-diaminopimelic acid, an essential component of bacterial cell walls. The protein is Succinyl-diaminopimelate desuccinylase of Rickettsia rickettsii (strain Iowa).